Consider the following 215-residue polypeptide: MIVGVVLAKNAQKAVEKIKSGEADLYEVRLDHFSSFDGLEELEPFAPNLIFTFRSYEEGGRREASDEERLRVYKRVLELYPAYVDVGLNSGIAERVVKEAREKRVGVVLSYHNFEETPDFWELLGVVKAMEALEPDVMKIVTMARSLGDNLRIARLYEGRENVVAFCMGSLGRLSRLISALLAPFTYASLDEEAAPGQLTVEELRRAIEVVGDGR.

Residues 27–29 (EVR) and R54 contribute to the 3-dehydroquinate site. H112 (proton donor/acceptor) is an active-site residue. The active-site Schiff-base intermediate with substrate is the K139. Positions 176 and 198 each coordinate 3-dehydroquinate.

It belongs to the type-I 3-dehydroquinase family. Homodimer.

It catalyses the reaction 3-dehydroquinate = 3-dehydroshikimate + H2O. It participates in metabolic intermediate biosynthesis; chorismate biosynthesis; chorismate from D-erythrose 4-phosphate and phosphoenolpyruvate: step 3/7. In terms of biological role, involved in the third step of the chorismate pathway, which leads to the biosynthesis of aromatic amino acids. Catalyzes the cis-dehydration of 3-dehydroquinate (DHQ) and introduces the first double bond of the aromatic ring to yield 3-dehydroshikimate. The protein is 3-dehydroquinate dehydratase of Thermococcus onnurineus (strain NA1).